The following is a 559-amino-acid chain: Cocaine esterase (559 aa).

Positions 1 to 26 (MRLHRLRARLSAVACGLLLLLVRGQG) are cleaved as a signal peptide. Gln-27 bears the Pyrrolidone carboxylic acid mark. A disulfide bridge links Cys-95 with Cys-123. Asn-111 carries N-linked (GlcNAc...) asparagine glycosylation. Ser-228 (acyl-ester intermediate) is an active-site residue. Asn-276 carries an N-linked (GlcNAc...) asparagine glycan. Cys-280 and Cys-291 are oxidised to a cystine. Active-site charge relay system residues include Glu-345 and His-457. The Prevents secretion from ER motif lies at 556 to 559 (HTEL).

Belongs to the type-B carboxylesterase/lipase family. In terms of assembly, monomer. In terms of processing, glycosylated. As to expression, preferentially expressed in intestine with moderate expression in liver. Within the intestine, highest expression is found in small intestine with lower expression in colon and rectum.

It localises to the endoplasmic reticulum lumen. The enzyme catalyses cocaine + H2O = ecgonine methyl ester + benzoate + H(+). The catalysed reaction is a carboxylic ester + H2O = an alcohol + a carboxylate + H(+). It carries out the reaction 4-methylumbelliferyl acetate + H2O = 4-methylumbelliferone + acetate + H(+). It catalyses the reaction 2-(5Z,8Z,11Z,14Z-eicosatetraenoyl)-glycerol + H2O = glycerol + (5Z,8Z,11Z,14Z)-eicosatetraenoate + H(+). The enzyme catalyses prostaglandin E2 1-glyceryl ester + H2O = prostaglandin E2 + glycerol + H(+). The catalysed reaction is prostaglandin F2alpha 1-glyceryl ester + H2O = prostaglandin F2alpha + glycerol + H(+). Functionally, involved in the detoxification of xenobiotics and in the activation of ester and amide prodrugs. Shows high catalytic efficiency for hydrolysis of cocaine, 4-methylumbelliferyl acetate, heroin and 6-monoacetylmorphine. Hydrolyzes aspirin, substrates with large alcohol group and small acyl group and endogenous lipids such as triacylglycerol. Converts monoacylglycerides to free fatty acids and glycerol. Hydrolyzes of 2-arachidonoylglycerol and prostaglandins. This chain is Cocaine esterase, found in Homo sapiens (Human).